The chain runs to 154 residues: Ribosome maturation factor RimP (154 aa).

The protein belongs to the RimP family.

The protein resides in the cytoplasm. Functionally, required for maturation of 30S ribosomal subunits. In Hydrogenobaculum sp. (strain Y04AAS1), this protein is Ribosome maturation factor RimP.